The sequence spans 159 residues: Protein A40 (159 aa).

Residues 1–9 (MNKHKTDYA) are Cytoplasmic-facing. Residues 10–30 (GYACCVICGLIVGIIFTATLL) form a helical; Signal-anchor for type II membrane protein membrane-spanning segment. At 31-159 (KVVERKLVHT…TPKLHSCYTI (129 aa)) the chain is on the extracellular side. A C-type lectin domain is found at 63–159 (YNNKCIHLST…TPKLHSCYTI (97 aa)).

The protein belongs to the poxviridae A40 protein family.

The protein resides in the host membrane. In Bos taurus (Bovine), this protein is Protein A40.